The chain runs to 699 residues: SPS-sensor serine protease component SSY5 (699 aa).

2 disordered regions span residues M1–F113 and P128–R158. Positions M1–A381 are excised as a propeptide. Residues N24–G38 are compositionally biased toward polar residues. A compositionally biased stretch (basic and acidic residues) spans N39–N51. Low complexity predominate over residues S61–R78. Over residues T83 to E93 the composition is skewed to polar residues. Composition is skewed to low complexity over residues H97 to N109 and S144 to S154. The tract at residues F459–G699 is serine protease. Catalysis depends on charge relay system residues H465, D545, and S640.

This sequence belongs to the peptidase S64 family. As to quaternary structure, component of the plasma membrane SPS (SSY1-PTR3-SSY5) amino acid sensor complex. The propeptide is autoproteolytically cleaved from the catalytic domain but remains associated, forming an inactive protease complex. This processing occurs even in the absence of signaling.

Its subcellular location is the cell membrane. Functionally, protease component of the SPS-sensor system, which regulates the expression of several amino acid-metabolizing enzymes and amino acid- and peptide-permeases in response to extracellular amino acid levels by controlling the activity of two transcription factors, STP1 and STP2. Catalyzes the activation of these transcription factors, which are synthesized as latent cytoplasmic precursors, by proteolytic removal of an N-terminal inhibitory domain containing cytoplasmic retention motifs. SSY5 binds as an inactive protease complex to STP1. In response to extracellular amino acids and dependent on the other SPS-sensor components, the inhibitory propeptide is induced to dissociate, and thereby enables the catalytic domain to process STP1. This Saccharomyces cerevisiae (strain ATCC 204508 / S288c) (Baker's yeast) protein is SPS-sensor serine protease component SSY5 (SSY5).